The sequence spans 361 residues: Chorismate synthase (361 aa).

2 residues coordinate NADP(+): arginine 48 and arginine 54. Residues 125-127 (RSS), 238-239 (NA), glycine 278, 293-297 (KPTSS), and arginine 319 contribute to the FMN site.

Belongs to the chorismate synthase family. In terms of assembly, homotetramer. It depends on FMNH2 as a cofactor.

It catalyses the reaction 5-O-(1-carboxyvinyl)-3-phosphoshikimate = chorismate + phosphate. Its pathway is metabolic intermediate biosynthesis; chorismate biosynthesis; chorismate from D-erythrose 4-phosphate and phosphoenolpyruvate: step 7/7. Functionally, catalyzes the anti-1,4-elimination of the C-3 phosphate and the C-6 proR hydrogen from 5-enolpyruvylshikimate-3-phosphate (EPSP) to yield chorismate, which is the branch point compound that serves as the starting substrate for the three terminal pathways of aromatic amino acid biosynthesis. This reaction introduces a second double bond into the aromatic ring system. The chain is Chorismate synthase from Escherichia coli (strain SE11).